We begin with the raw amino-acid sequence, 480 residues long: Proline--tRNA ligase (480 aa).

It belongs to the class-II aminoacyl-tRNA synthetase family. ProS type 3 subfamily. In terms of assembly, homodimer.

Its subcellular location is the cytoplasm. The catalysed reaction is tRNA(Pro) + L-proline + ATP = L-prolyl-tRNA(Pro) + AMP + diphosphate. Its function is as follows. Catalyzes the attachment of proline to tRNA(Pro) in a two-step reaction: proline is first activated by ATP to form Pro-AMP and then transferred to the acceptor end of tRNA(Pro). The polypeptide is Proline--tRNA ligase (Roseiflexus castenholzii (strain DSM 13941 / HLO8)).